We begin with the raw amino-acid sequence, 213 residues long: Phosphoribosylformylglycinamidine synthase subunit PurQ (213 aa).

The region spanning 5–213 (ACVVVYPGSN…FQSILNYLKR (209 aa)) is the Glutamine amidotransferase type-1 domain. Cys86 serves as the catalytic Nucleophile. Active-site residues include His186 and Glu188.

Part of the FGAM synthase complex composed of 1 PurL, 1 PurQ and 2 PurS subunits.

It is found in the cytoplasm. It catalyses the reaction N(2)-formyl-N(1)-(5-phospho-beta-D-ribosyl)glycinamide + L-glutamine + ATP + H2O = 2-formamido-N(1)-(5-O-phospho-beta-D-ribosyl)acetamidine + L-glutamate + ADP + phosphate + H(+). The enzyme catalyses L-glutamine + H2O = L-glutamate + NH4(+). The protein operates within purine metabolism; IMP biosynthesis via de novo pathway; 5-amino-1-(5-phospho-D-ribosyl)imidazole from N(2)-formyl-N(1)-(5-phospho-D-ribosyl)glycinamide: step 1/2. Part of the phosphoribosylformylglycinamidine synthase complex involved in the purines biosynthetic pathway. Catalyzes the ATP-dependent conversion of formylglycinamide ribonucleotide (FGAR) and glutamine to yield formylglycinamidine ribonucleotide (FGAM) and glutamate. The FGAM synthase complex is composed of three subunits. PurQ produces an ammonia molecule by converting glutamine to glutamate. PurL transfers the ammonia molecule to FGAR to form FGAM in an ATP-dependent manner. PurS interacts with PurQ and PurL and is thought to assist in the transfer of the ammonia molecule from PurQ to PurL. This chain is Phosphoribosylformylglycinamidine synthase subunit PurQ, found in Thermotoga maritima (strain ATCC 43589 / DSM 3109 / JCM 10099 / NBRC 100826 / MSB8).